Reading from the N-terminus, the 166-residue chain is Small ribosomal subunit protein uS5 (166 aa).

The region spanning 10–73 is the S5 DRBM domain; that stretch reads QIEKLISLNR…TSARKNLRFV (64 aa).

It belongs to the universal ribosomal protein uS5 family. In terms of assembly, part of the 30S ribosomal subunit. Contacts proteins S4 and S8.

Its function is as follows. With S4 and S12 plays an important role in translational accuracy. Located at the back of the 30S subunit body where it stabilizes the conformation of the head with respect to the body. This Borrelia garinii subsp. bavariensis (strain ATCC BAA-2496 / DSM 23469 / PBi) (Borreliella bavariensis) protein is Small ribosomal subunit protein uS5.